The chain runs to 3412 residues: Genome polyprotein (3412 aa).

The Cytoplasmic portion of the chain corresponds to 1–104 (MSGRKAQGKT…LSSRKRRSNE (104 aa)). Positions 38–72 (PGPSRGVQGFIFFFLFNILTGKKLTAHLKKLWRML) are hydrophobic; homodimerization of capsid protein C. A propeptide spans 102–121 (SNEMALFPLLLLGLLALSGG) (ER anchor for the capsid protein C, removed in mature form by serine protease NS3). A helical membrane pass occupies residues 105 to 125 (MALFPLLLLGLLALSGGVTLV). The Extracellular segment spans residues 126–244 (RKNRWLLLNV…GERQLQKIER (119 aa)). 2 N-linked (GlcNAc...) asparagine; by host glycosylation sites follow: Asn134 and Asn150. A helical membrane pass occupies residues 245 to 265 (WLVRNPFFAVTALAIAYLVGN). Residues 266-270 (NTTQR) lie on the Cytoplasmic side of the membrane. A helical transmembrane segment spans residues 271 to 285 (VVIALLVLAVGPAYS). At 286–730 (AHCIGITDRD…TVFGSAFQGL (445 aa)) the chain is on the extracellular side. 8 disulfide bridges follow: Cys288–Cys315, Cys345–Cys401, Cys345–Cys406, Cys359–Cys390, Cys377–Cys401, Cys377–Cys406, Cys467–Cys568, and Cys585–Cys615. The segment at 383–396 (DRGWGNGCGLFGKG) is fusion peptide. A helical transmembrane segment spans residues 731-751 (FGGLSWITKVIMGAVLIWVGI). Residues 752–757 (NTRNMT) lie on the Extracellular side of the membrane. Residues 758-778 (MSMSMILVGVIMMFLSLGVGA) form a helical membrane-spanning segment. Residues 779 to 1132 (DQGCAVNFGK…LVRSWVTAGE (354 aa)) lie on the Extracellular side of the membrane. 6 disulfides stabilise this stretch: Cys782–Cys793, Cys833–Cys921, Cys957–Cys1002, Cys1058–Cys1107, Cys1069–Cys1091, and Cys1090–Cys1094. N-linked (GlcNAc...) asparagine; by host glycans are attached at residues Asn908 and Asn986. Residues 1133–1153 (VHAVPFGLVSMMIAMEVVLRR) form a helical membrane-spanning segment. At 1154-1201 (RQGPKQMLVGGVVLLGAMLVGQVTVLDLVKFVVAVGLHFHEINNGGDA) the chain is on the cytoplasmic side. The helical transmembrane segment at 1202–1222 (MYMALIASFSIRPGLLMGFGL) threads the bilayer. At 1223–1287 (RTLWSPRERL…ILPLMALMTP (65 aa)) the chain is on the lumenal side. A helical transmembrane segment spans residues 1288 to 1308 (MTMHEVRMATMLFCTVVIIGV). The Cytoplasmic portion of the chain corresponds to 1309 to 1355 (LHQNSKDTSMQKTIPIVALTLTSYMGLTQPFLGLCAYMSTQVFGRRS). The helical transmembrane segment at 1356–1376 (IPVNEALAAAGLVGVLAGLAF) threads the bilayer. Topologically, residues 1377–1378 (QD) are lumenal. The chain crosses the membrane as a helical span at residues 1379–1399 (MENFLGPIAVGGILMMLVSVA). Residues 1400-1456 (GRVDGLELKKLGEISWEEEAEISGSSSRYDVALSEQGEFKLLSEDKVPWDQIVMTSL) lie on the Cytoplasmic side of the membrane. The tract at residues 1407-1446 (LKKLGEISWEEEAEISGSSSRYDVALSEQGEFKLLSEDKV) is interacts with and activates NS3 protease. Positions 1457-1477 (ALVGAAIHPFALLLVLGGWIL) form an intramembrane region, helical. The Cytoplasmic segment spans residues 1478–2157 (HIKGARRSGD…RNALSMMPEA (680 aa)). One can recognise a Peptidase S7 domain in the interval 1485 to 1665 (SGDVLWDIPT…ELKEESKEEL (181 aa)). Catalysis depends on charge relay system; for serine protease NS3 activity residues His1537, Asp1561, and Ser1622. The 157-residue stretch at 1669–1825 (PTMLKKGMTT…HSNGEIEDVQ (157 aa)) folds into the Helicase ATP-binding domain. The tract at residues 1673-1676 (KKGM) is important for RNA-binding. 1682-1689 (FHPGAGKT) is a binding site for ATP. The DEAH box signature appears at 1773 to 1776 (DEAH). The Helicase C-terminal domain maps to 1836–1997 (GHEWILADKR…VRGGMVAPLY (162 aa)). Position 1877 is an N6-acetyllysine; by host (Lys1877). The tract at residues 1942-1963 (AAQRRGRIGRNPNRDGDSYYYS) is disordered. A helical transmembrane segment spans residues 2158-2178 (MTIVMLFLLAGLLTSGAVIFF). Over 2179-2186 (MSPKGMSR) the chain is Lumenal. The helical intramembrane region spans 2187 to 2207 (MSMAMGTMAGSGYLMFLGGVK). Residues 2208–2209 (PT) lie on the Lumenal side of the membrane. Residues 2210–2230 (HISYVMLIFFVLMVVVIPEPG) form a helical membrane-spanning segment. Residues 2231 to 2241 (QQRTIQDNQVA) are Cytoplasmic-facing. A helical transmembrane segment spans residues 2242–2262 (YLIIGILTLLSVVAANELGML). At 2263-2293 (EKTKEDFFGKRDITTPSGAIPWSWPDLDLKP) the chain is on the lumenal side. Residues 2294 to 2314 (GAAWTVYVGIVTMLSPMLHHW) constitute an intramembrane region (helical). Residues 2315-2360 (IKVEYGNLSLSGIAQSASVLSFMDKGIPFMKMNISVVILLVSGWNS) lie on the Lumenal side of the membrane. Residues 2361–2380 (ITVIPLLCGIGGAMLHWTLI) form a helical membrane-spanning segment. Over 2381-2421 (LPGIKAQQSKLAQKRVFHGVAKNPVVDGNPTADIEEAPEMP) the chain is Cytoplasmic. Residues 2422–2442 (ALYEKKLALYLLLALSLMSVA) traverse the membrane as a helical segment. The Lumenal segment spans residues 2443-2445 (MCR). Residues 2446 to 2466 (TPFSLAEGIVLSSAALGPLIE) traverse the membrane as a helical segment. Residues 2467–3411 (GNTSLLWNGP…VDADLQPGEL (945 aa)) are Cytoplasmic-facing. One can recognise an mRNA cap 0-1 NS5-type MT domain in the interval 2508–2772 (GSASGKTLGE…DVILPIGTRS (265 aa)). Position 2563 (Ser2563) interacts with S-adenosyl-L-methionine. Ser2563 bears the Phosphoserine mark. Lys2568 functions as the For 2'-O-MTase activity in the catalytic mechanism. S-adenosyl-L-methionine-binding residues include Gly2593, Trp2594, Thr2611, Leu2612, Asp2638, and Val2639. The active-site For 2'-O-MTase activity is Asp2653. An S-adenosyl-L-methionine-binding site is contributed by Ile2654. Active-site for 2'-O-MTase activity residues include Lys2689 and Glu2725. Tyr2727 is a binding site for S-adenosyl-L-methionine. A Nuclear localization signal motif is present at residues 2879 to 2912 (RKIMKVVNRWLFRHLSREKNPRLCTKEEFIAKVR). Residues Glu2946, His2950, Cys2955, and Cys2958 each contribute to the Zn(2+) site. In terms of domain architecture, RdRp catalytic spans 3036–3188 (GGFYADDTAG…RPVDDRFGLA (153 aa)). Zn(2+)-binding residues include His3223, Cys3239, and Cys3358.

The protein in the N-terminal section; belongs to the class I-like SAM-binding methyltransferase superfamily. mRNA cap 0-1 NS5-type methyltransferase family. In terms of assembly, homodimer. Interacts (via N-terminus) with host EXOC1 (via C-terminus); this interaction results in EXOC1 degradation through the proteasome degradation pathway. Forms heterodimers with envelope protein E in the endoplasmic reticulum and Golgi. As to quaternary structure, homodimer; in the endoplasmic reticulum and Golgi. Interacts with protein prM. Interacts with non-structural protein 1. In terms of assembly, homodimer; Homohexamer when secreted. Interacts with envelope protein E. Interacts (via N-terminus) with serine protease NS3. As to quaternary structure, forms a heterodimer with serine protease NS3. May form homooligomers. In terms of assembly, forms a heterodimer with NS2B. Interacts with non-structural protein 2A (via N-terminus). Interacts with NS4B. Interacts with unphosphorylated RNA-directed RNA polymerase NS5; this interaction stimulates RNA-directed RNA polymerase NS5 guanylyltransferase activity. NS3 interacts with host PDCD6IP; this interaction contributes to virion release. Interacts with serine protease NS3. As to quaternary structure, homodimer. Interacts with host STAT2; this interaction prevents the establishment of cellular antiviral state. Interacts with serine protease NS3. Interacts with host TRIM23; this interaction leads to NS5 ubiquitination. In terms of processing, specific enzymatic cleavages in vivo yield mature proteins. The nascent capsid protein C contains a C-terminal hydrophobic domain that act as a signal sequence for translocation of prM into the lumen of the ER. Mature capsid protein C is cleaved at a site upstream of this hydrophobic domain by NS3. prM is cleaved in post-Golgi vesicles by a host furin, releasing the mature small envelope protein M, and peptide pr. Non-structural protein 2A-alpha, a C-terminally truncated form of non-structural protein 2A, results from partial cleavage by NS3. Specific enzymatic cleavages in vivo yield mature proteins peptide 2K acts as a signal sequence and is removed from the N-terminus of NS4B by the host signal peptidase in the ER lumen. Signal cleavage at the 2K-4B site requires a prior NS3 protease-mediated cleavage at the 4A-2K site. Cleaved in post-Golgi vesicles by a host furin, releasing the mature small envelope protein M, and peptide pr. This cleavage is incomplete as up to 30% of viral particles still carry uncleaved prM. Post-translationally, N-glycosylated. In terms of processing, N-glycosylated. The excreted form is glycosylated and this is required for efficient secretion of the protein from infected cells. Polyubiquitinated; ubiquitination is probably mediated by host TRIM23 and is prerequisite for NS5-STAT2 interaction. NS5 is not ISGylated or sumoylated. Post-translationally, acetylated by host KAT5. Acetylation modulates NS3 RNA-binding and unwinding activities and plays an important positive role for viral replication. In terms of processing, phosphorylated on serines residues. This phosphorylation may trigger NS5 nuclear localization.

It is found in the virion. The protein localises to the host nucleus. The protein resides in the host cytoplasm. Its subcellular location is the host perinuclear region. It localises to the secreted. It is found in the virion membrane. The protein localises to the host endoplasmic reticulum membrane. The enzyme catalyses Selective hydrolysis of -Xaa-Xaa-|-Yaa- bonds in which each of the Xaa can be either Arg or Lys and Yaa can be either Ser or Ala.. It carries out the reaction RNA(n) + a ribonucleoside 5'-triphosphate = RNA(n+1) + diphosphate. It catalyses the reaction a ribonucleoside 5'-triphosphate + H2O = a ribonucleoside 5'-diphosphate + phosphate + H(+). The catalysed reaction is ATP + H2O = ADP + phosphate + H(+). The enzyme catalyses a 5'-end (5'-triphosphoguanosine)-ribonucleoside in mRNA + S-adenosyl-L-methionine = a 5'-end (N(7)-methyl 5'-triphosphoguanosine)-ribonucleoside in mRNA + S-adenosyl-L-homocysteine. It carries out the reaction a 5'-end (N(7)-methyl 5'-triphosphoguanosine)-ribonucleoside in mRNA + S-adenosyl-L-methionine = a 5'-end (N(7)-methyl 5'-triphosphoguanosine)-(2'-O-methyl-ribonucleoside) in mRNA + S-adenosyl-L-homocysteine + H(+). Functionally, plays a role in virus budding by binding to the cell membrane and gathering the viral RNA into a nucleocapsid that forms the core of a mature virus particle. During virus entry, may induce genome penetration into the host cytoplasm after hemifusion induced by the surface proteins. Can migrate to the cell nucleus where it modulates host functions. Inhibits RNA silencing by interfering with host Dicer. Its function is as follows. Prevents premature fusion activity of envelope proteins in trans-Golgi by binding to envelope protein E at pH6.0. After virion release in extracellular space, gets dissociated from E dimers. In terms of biological role, acts as a chaperone for envelope protein E during intracellular virion assembly by masking and inactivating envelope protein E fusion peptide. prM is the only viral peptide matured by host furin in the trans-Golgi network probably to avoid catastrophic activation of the viral fusion activity in acidic Golgi compartment prior to virion release. prM-E cleavage is inefficient, and many virions are only partially matured. These uncleaved prM would play a role in immune evasion. Functionally, may play a role in virus budding. Exerts cytotoxic effects by activating a mitochondrial apoptotic pathway through M ectodomain. May display a viroporin activity. Binds to host cell surface receptor and mediates fusion between viral and cellular membranes. Envelope protein is synthesized in the endoplasmic reticulum in the form of heterodimer with protein prM. They play a role in virion budding in the ER, and the newly formed immature particle is covered with 60 spikes composed of heterodimer between precursor prM and envelope protein E. The virion is transported to the Golgi apparatus where the low pH causes dissociation of PrM-E heterodimers and formation of E homodimers. prM-E cleavage is inefficient, and many virions are only partially matured. These uncleaved prM would play a role in immune evasion. Its function is as follows. Involved in immune evasion, pathogenesis and viral replication. Once cleaved off the polyprotein, is targeted to three destinations: the viral replication cycle, the plasma membrane and the extracellular compartment. Essential for viral replication. Required for formation of the replication complex and recruitment of other non-structural proteins to the ER-derived membrane structures. Excreted as a hexameric lipoparticle that plays a role against host immune response. Antagonizing the complement function. Binds to the host macrophages and dendritic cells. Inhibits signal transduction originating from Toll-like receptor 3 (TLR3). In terms of biological role, component of the viral RNA replication complex that functions in virion assembly and antagonizes the host immune response. Functionally, required cofactor for the serine protease function of NS3. May have membrane-destabilizing activity and form viroporins. Displays three enzymatic activities: serine protease, NTPase and RNA helicase. NS3 serine protease, in association with NS2B, performs its autocleavage and cleaves the polyprotein at dibasic sites in the cytoplasm: C-prM, NS2A-NS2B, NS2B-NS3, NS3-NS4A, NS4A-2K and NS4B-NS5. NS3 RNA helicase binds RNA and unwinds dsRNA in the 3' to 5' direction. Also plays a role in virus assembly. Its function is as follows. Regulates the ATPase activity of the NS3 helicase activity. NS4A allows NS3 helicase to conserve energy during unwinding. In terms of biological role, functions as a signal peptide for NS4B and is required for the interferon antagonism activity of the latter. Functionally, induces the formation of ER-derived membrane vesicles where the viral replication takes place. Inhibits interferon (IFN)-induced host STAT1 phosphorylation and nuclear translocation, thereby preventing the establishment of cellular antiviral state by blocking the IFN-alpha/beta pathway. Replicates the viral (+) and (-) RNA genome, and performs the capping of genomes in the cytoplasm. NS5 methylates viral RNA cap at guanine N-7 and ribose 2'-O positions. Besides its role in RNA genome replication, also prevents the establishment of cellular antiviral state by blocking the interferon-alpha/beta (IFN-alpha/beta) signaling pathway. IFN-I induces binding of NS5 to host IFN-activated transcription factor STAT2, preventing its transcriptional activity. Host TRIM23 is the E3 ligase that interacts with and polyubiquitinates NS5 to promote its binding to STAT2 and trigger IFN-I signaling inhibition. This is Genome polyprotein from Aedes aegypti (Yellowfever mosquito).